Consider the following 276-residue polypeptide: 2-dehydro-3-deoxyphosphooctonate aldolase (276 aa).

The protein belongs to the KdsA family.

It is found in the cytoplasm. It catalyses the reaction D-arabinose 5-phosphate + phosphoenolpyruvate + H2O = 3-deoxy-alpha-D-manno-2-octulosonate-8-phosphate + phosphate. It functions in the pathway carbohydrate biosynthesis; 3-deoxy-D-manno-octulosonate biosynthesis; 3-deoxy-D-manno-octulosonate from D-ribulose 5-phosphate: step 2/3. Its pathway is bacterial outer membrane biogenesis; lipopolysaccharide biosynthesis. The protein is 2-dehydro-3-deoxyphosphooctonate aldolase of Helicobacter pylori (strain HPAG1).